The chain runs to 65 residues: Ubiquinol-cytochrome-c reductase complex assembly factor 6 (65 aa).

The Mitochondrial matrix portion of the chain corresponds to 1 to 9 (MPAGVSWPR). Residues 10–32 (YLRMFAASVLSMFAGAQVVHHYY) form a helical; Signal-anchor for type II membrane protein membrane-spanning segment. Residues 33–65 (RPDLSIPEIPPKPGELRTELLGLKERQMDSQKQ) lie on the Mitochondrial intermembrane side of the membrane.

It belongs to the UQCC6 family. Highly expressed in skeletal and cardiac muscle (at protein level).

Its subcellular location is the mitochondrion inner membrane. Its function is as follows. Required for the assembly and stability of the mitochondrial ubiquinol-cytochrome c reductase complex (complex III (CIII) or cytochrome b-c1 complex), a multisubunit transmembrane complex that is part of the mitochondrial electron transport chain (ETC) which drives oxidative phosphorylation. Mediates early complex III biogenesis. Participates in regulating the levels of electron transport chain proteins, and therefore energy supply, in response to changes in energy demand. Also required for cytochrome c oxidase complex (complex IV) assembly. In Danio rerio (Zebrafish), this protein is Ubiquinol-cytochrome-c reductase complex assembly factor 6 (uqcc6).